The chain runs to 154 residues: Superoxide dismutase [Cu-Zn] (154 aa).

Residues His47 and His64 each contribute to the Cu cation site. Cysteines 58 and 147 form a disulfide. Positions 64, 72, 81, and 84 each coordinate Zn(2+). His121 serves as a coordination point for Cu cation. Arg144 is a substrate binding site.

Belongs to the Cu-Zn superoxide dismutase family. In terms of assembly, homodimer. Requires Cu cation as cofactor. It depends on Zn(2+) as a cofactor.

The protein resides in the cytoplasm. The catalysed reaction is 2 superoxide + 2 H(+) = H2O2 + O2. Destroys radicals which are normally produced within the cells and which are toxic to biological systems. This Pleurocordyceps sinensis (Polycephalomyces sinensis) protein is Superoxide dismutase [Cu-Zn] (SOD1).